Consider the following 377-residue polypeptide: Glycine oxidase (377 aa).

FAD is bound by residues 14–15 (VI), 34–35 (EK), 42–43 (AS), 47–49 (AGM), and Val-180. The substrate site is built by Arg-309 and Arg-336. 334–340 (HYRNGIL) contacts FAD.

This sequence belongs to the DAO family. ThiO subfamily. In terms of assembly, homotetramer. It depends on FAD as a cofactor.

The catalysed reaction is glycine + O2 + H2O = glyoxylate + H2O2 + NH4(+). It carries out the reaction N-ethylglycine + O2 + H2O = ethylamine + glyoxylate + H2O2. The enzyme catalyses sarcosine + O2 + H2O = methylamine + glyoxylate + H2O2. It catalyses the reaction D-alanine + O2 + H2O = pyruvate + H2O2 + NH4(+). It participates in cofactor biosynthesis; thiamine diphosphate biosynthesis. With respect to regulation, is inhibited at high substrate concentration. Its function is as follows. Catalyzes the FAD-dependent oxidative deamination of various amines and D-amino acids to yield the corresponding alpha-keto acids, ammonia/amine, and hydrogen peroxide. Oxidizes glycine, sarcosine (N-methylglycine), N-ethylglycine, D-proline, D-alanine, glycine-ethyl ester, and some other D-amino acids. Does not act on L-proline. Is essential for thiamine biosynthesis since the oxidation of glycine catalyzed by ThiO generates the glycine imine intermediate (dehydroglycine) required for the biosynthesis of the thiazole ring of thiamine pyrophosphate. The polypeptide is Glycine oxidase (Geobacillus kaustophilus (strain HTA426)).